The primary structure comprises 138 residues: Thyrotropin subunit beta (138 aa).

Positions 1–20 (MTAIYLMSMLFGLACGQAMS) are cleaved as a signal peptide. 6 disulfide bridges follow: Cys22–Cys72, Cys36–Cys87, Cys39–Cys125, Cys47–Cys103, Cys51–Cys105, and Cys108–Cys115. A glycan (N-linked (GlcNAc...) asparagine) is linked at Asn43. Residues 133 to 138 (VVGFSI) constitute a propeptide that is removed on maturation.

The protein belongs to the glycoprotein hormones subunit beta family. Heterodimer of a common alpha chain and a unique beta chain which confers biological specificity to thyrotropin, lutropin, follitropin and gonadotropin.

It is found in the secreted. Indispensable for the control of thyroid structure and metabolism. In Canis lupus familiaris (Dog), this protein is Thyrotropin subunit beta (TSHB).